Here is a 61-residue protein sequence, read N- to C-terminus: Large ribosomal subunit protein uL30 (61 aa).

This sequence belongs to the universal ribosomal protein uL30 family. Part of the 50S ribosomal subunit.

In Chromohalobacter salexigens (strain ATCC BAA-138 / DSM 3043 / CIP 106854 / NCIMB 13768 / 1H11), this protein is Large ribosomal subunit protein uL30.